Reading from the N-terminus, the 354-residue chain is Tryptophan--tRNA ligase (354 aa).

Residues 13–15 and 21–22 contribute to the ATP site; these read QPT and GN. A 'HIGH' region motif is present at residues 14–22; that stretch reads PTGNLHLGN. L-tryptophan is bound at residue D137. Residues 149 to 151, V208, and 217 to 221 each bind ATP; these read GDD and KMSKS. Residues 217–221 carry the 'KMSKS' region motif; it reads KMSKS.

This sequence belongs to the class-I aminoacyl-tRNA synthetase family. Homodimer.

The protein localises to the cytoplasm. The catalysed reaction is tRNA(Trp) + L-tryptophan + ATP = L-tryptophyl-tRNA(Trp) + AMP + diphosphate + H(+). Functionally, catalyzes the attachment of tryptophan to tRNA(Trp). The polypeptide is Tryptophan--tRNA ligase (Agrobacterium fabrum (strain C58 / ATCC 33970) (Agrobacterium tumefaciens (strain C58))).